The primary structure comprises 106 residues: Nucleoid-associated protein Noc_2594 (106 aa).

Disordered regions lie at residues 1 to 20 (MKGG…SNME) and 85 to 106 (QSKE…KLPL). Positions 10–20 (KQAQQLQSNME) are enriched in polar residues.

Belongs to the YbaB/EbfC family. As to quaternary structure, homodimer.

It is found in the cytoplasm. The protein resides in the nucleoid. Binds to DNA and alters its conformation. May be involved in regulation of gene expression, nucleoid organization and DNA protection. The protein is Nucleoid-associated protein Noc_2594 of Nitrosococcus oceani (strain ATCC 19707 / BCRC 17464 / JCM 30415 / NCIMB 11848 / C-107).